Here is a 594-residue protein sequence, read N- to C-terminus: Protein wntless (594 aa).

The Cytoplasmic segment spans residues 1–13; the sequence is MSGTILENLSGRK. The chain crosses the membrane as a helical span at residues 14–34; it reads LSILVATLLLCQVLCFLLGGL. Residues 35 to 239 are Lumenal-facing; sequence YAPLPAGHVT…AIHQNGGFTQ (205 aa). A glycan (N-linked (GlcNAc...) asparagine) is linked at N58. Residues 240 to 260 form a helical membrane-spanning segment; the sequence is IWLLLKTMLFPFVVGIMIWFW. Residues 261 to 270 lie on the Cytoplasmic side of the membrane; that stretch reads RRVHLLQRSP. The chain crosses the membrane as a helical span at residues 271–291; that stretch reads ALLEYMLIYLGAALTFLNLPL. Topologically, residues 292 to 311 are lumenal; it reads EYLSLVYEMPYMLLLSDIRQ. A helical membrane pass occupies residues 312 to 332; sequence GIFYAMLLTFWLVFAGEHMLI. Topologically, residues 333–344 are cytoplasmic; the sequence is QDAPNKSTIRSR. The helical transmembrane segment at 345-365 threads the bilayer; the sequence is YWKHLSAVVVGCISLFVFDIC. At 366-390 the chain is on the lumenal side; that stretch reads ERGVQLRNPFYSIWTTPLGAKVAMT. The helical transmembrane segment at 391 to 411 threads the bilayer; sequence FIVLAGVSAAIYFLFLCYMIW. Residues 412 to 473 lie on the Cytoplasmic side of the membrane; sequence KVFRNIGDKR…ANESKGLIYR (62 aa). Residues 474–494 form a helical membrane-spanning segment; the sequence is FKFLMLATLVCAALTVAGFIM. Residues 495-514 lie on the Lumenal side of the membrane; it reads GQMAEGQWDWNDNVAIQPTS. The helical transmembrane segment at 515–535 threads the bilayer; it reads AFLTGVYGMWNIYIFALLILY. The Cytoplasmic segment spans residues 536 to 594; the sequence is APSHKQWPTMHHSDETTQSNENIVASAASEEIEFSHLPSDSNPSEISSLTSFTRKVAFD. The interval 571–594 is disordered; it reads HLPSDSNPSEISSLTSFTRKVAFD. Residues 573–588 are compositionally biased toward polar residues; the sequence is PSDSNPSEISSLTSFT.

It belongs to the wntless family. Interacts with wg; in the Golgi. Interacts with Vps35, a component of the retromer complex; wls stability is regulated by Vps35. As to expression, ubiquitously expressed in the wing imaginal disk, increased expression is observed in a stripe at the dorso-ventral boundary and other regions of the wing disk that express wg. Also expresses in the leg imaginal disk. During larval development, expression is seen in both motorneurons and muscle.

Its subcellular location is the presynaptic cell membrane. It is found in the postsynaptic cell membrane. It localises to the cell membrane. The protein resides in the endosome membrane. The protein localises to the endoplasmic reticulum membrane. Its subcellular location is the golgi apparatus membrane. Functionally, a segment polarity gene required for wingless (wg)-dependent patterning processes, acting in both wg-sending cells and wg-target cells. In non-neuronal cells wls directs wg secretion. The wls traffic loop encompasses the Golgi, the cell surface, an endocytic compartment and a retrograde route leading back to the Golgi, and involves clathrin-mediated endocytosis and the retromer complex (a conserved protein complex consisting of Vps35 and Vps26). In neuronal cells (the larval motorneuron NMJ), the wg signal moves across the synapse via the release of wls-containing exosome-like vesicles. Postsynaptic wls is required for the trafficking of fz2 through the fz2-interacting protein Grip. This is Protein wntless from Drosophila melanogaster (Fruit fly).